Consider the following 222-residue polypeptide: Ribonuclease 3 (222 aa).

The 123-residue stretch at 5–127 folds into the RNase III domain; sequence PIKLEKKLKL…LIGAIYLDKG (123 aa). Residue glutamate 41 coordinates Mg(2+). The active site involves aspartate 45. Mg(2+) contacts are provided by aspartate 113 and glutamate 116. Residue glutamate 116 is part of the active site. Residues 152 to 221 form the DRBM domain; the sequence is DAKTKLQEYS…ASLCLQDIFK (70 aa).

The protein belongs to the ribonuclease III family. As to quaternary structure, homodimer. It depends on Mg(2+) as a cofactor.

It localises to the cytoplasm. It catalyses the reaction Endonucleolytic cleavage to 5'-phosphomonoester.. In terms of biological role, digests double-stranded RNA. Involved in the processing of primary rRNA transcript to yield the immediate precursors to the large and small rRNAs (23S and 16S). Processes some mRNAs, and tRNAs when they are encoded in the rRNA operon. Processes pre-crRNA and tracrRNA of type II CRISPR loci if present in the organism. The chain is Ribonuclease 3 from Pelagibacter ubique (strain HTCC1062).